The sequence spans 60 residues: UPF0434 protein ECA2555 (60 aa).

The protein belongs to the UPF0434 family.

The chain is UPF0434 protein ECA2555 from Pectobacterium atrosepticum (strain SCRI 1043 / ATCC BAA-672) (Erwinia carotovora subsp. atroseptica).